A 318-amino-acid polypeptide reads, in one-letter code: Mevalonate 3-kinase (318 aa).

Residue Leu19 coordinates substrate. ATP is bound by residues 96-100 and 105-108; these read YSSQN and SGSS. Positions 140 and 144 each coordinate substrate. ATP-binding residues include Arg185 and Ser188.

This sequence belongs to the GHMP kinase family. In terms of assembly, homodimer.

The catalysed reaction is (R)-mevalonate + ATP = (R)-3-phosphomevalonate + ADP + H(+). It participates in isoprenoid biosynthesis; isopentenyl diphosphate biosynthesis via mevalonate pathway. Catalyzes the phosphorylation of mevalonate (MVA) to yield mevalonate-3-phosphate. Functions in an alternative mevalonate pathway, only present in extreme acidophiles of the Thermoplasmatales order, which passes through mevalonate 3-phosphate rather than mevalonate 5-phosphate. The sequence is that of Mevalonate 3-kinase from Thermoplasma acidophilum (strain ATCC 25905 / DSM 1728 / JCM 9062 / NBRC 15155 / AMRC-C165).